We begin with the raw amino-acid sequence, 337 residues long: Mating-type protein MAT-2 (337 aa).

The segment at residues Ala-125–Lys-193 is a DNA-binding region (HMG box). The interval Lys-171–Ala-219 is disordered. The segment covering Gly-200–Arg-212 has biased composition (basic residues).

Its subcellular location is the nucleus. In Cochliobolus sativus (Common root rot and spot blotch fungus), this protein is Mating-type protein MAT-2 (MAT2).